A 192-amino-acid chain; its full sequence is Interleukin-18 (192 aa).

A propeptide spanning residues 1–35 (MAAMSEDSCVNFKEMMFIDNTLYFIPEENGDLESD) is cleaved from the precursor.

It belongs to the IL-1 family. In terms of assembly, forms a ternary complex with ligand-binding receptor subunit IL18R1 and signaling receptor subunit IL18RAP at the plasma membrane. Mature IL18 first binds to IL18R1 forming a low affinity binary complex, which then interacts with IL18RAP to form a high affinity ternary complex that signals inside the cell. Interacts with cargo receptor TMED10; the interaction mediates the translocation from the cytoplasm into the ERGIC (endoplasmic reticulum-Golgi intermediate compartment) and thereby secretion. The pro-IL-18 precursor is processed by CASP1 to yield its mature, active form. The pro-IL-18 precursor is however not processed by Casp4/Casp11 in rodents. The pro-IL-18 precursor features autoinhibitory interactions between the propeptide and the post-cleavage-site region, preventing recognition by the IL18R1 receptor. Processing by CASP1 induces conformational changes to generate critical receptor-binding sites. The mature form is then secreted and released in the extracellular milieu by passing through the gasdermin-D (GSDMD) pore. In contrast, cleavage by CASP3 inactivates IL18.

It localises to the cytoplasm. It is found in the secreted. Its function is as follows. Pro-inflammatory cytokine primarily involved in epithelial barrier repair, polarized T-helper 1 (Th1) cell and natural killer (NK) cell immune responses. Upon binding to IL18R1 and IL18RAP, forms a signaling ternary complex which activates NF-kappa-B, triggering synthesis of inflammatory mediators. Synergizes with IL12/interleukin-12 to induce IFNG synthesis from T-helper 1 (Th1) cells and natural killer (NK) cells. Involved in transduction of inflammation downstream of pyroptosis: its mature form is specifically released in the extracellular milieu by passing through the gasdermin-D (GSDMD) pore. The protein is Interleukin-18 of Mus musculus (Mouse).